The chain runs to 877 residues: Leucine--tRNA ligase (877 aa).

A 'HIGH' region motif is present at residues 48 to 58 (PYPSGKLHMGH). The 'KMSKS' region signature appears at 636-640 (KMSKS). Lys-639 is an ATP binding site.

The protein belongs to the class-I aminoacyl-tRNA synthetase family.

Its subcellular location is the cytoplasm. The catalysed reaction is tRNA(Leu) + L-leucine + ATP = L-leucyl-tRNA(Leu) + AMP + diphosphate. This is Leucine--tRNA ligase from Ralstonia nicotianae (strain ATCC BAA-1114 / GMI1000) (Ralstonia solanacearum).